A 174-amino-acid polypeptide reads, in one-letter code: Bifunctional protein PyrR (174 aa).

A PRPP-binding motif is present at residues 97–109 (VVIVDDVLYTGRT).

Belongs to the purine/pyrimidine phosphoribosyltransferase family. PyrR subfamily. In terms of assembly, homodimer and homohexamer; in equilibrium.

It catalyses the reaction UMP + diphosphate = 5-phospho-alpha-D-ribose 1-diphosphate + uracil. Regulates transcriptional attenuation of the pyrimidine nucleotide (pyr) operon by binding in a uridine-dependent manner to specific sites on pyr mRNA. This disrupts an antiterminator hairpin in the RNA and favors formation of a downstream transcription terminator, leading to a reduced expression of downstream genes. In terms of biological role, also displays a weak uracil phosphoribosyltransferase activity which is not physiologically significant. This is Bifunctional protein PyrR from Macrococcus caseolyticus (strain JCSC5402) (Macrococcoides caseolyticum).